A 196-amino-acid chain; its full sequence is UMP-CMP kinase (196 aa).

13–18 contributes to the ATP binding site; it reads GAGKGT. Serine 33 bears the Phosphoserine mark. The tract at residues 33–63 is NMP; it reads SAGELLRDERKNPDSQYGELIEKYIKDGKIV. Arginine 39 lines the a ribonucleoside 5'-phosphate pocket. 2 positions are modified to N6-acetyllysine: lysine 43 and lysine 55. A ribonucleoside 5'-phosphate contacts are provided by residues 61-63 and 93-96; these read KIV and GFPR. Asparagine 100 provides a ligand contact to CMP. Lysine 106 is modified (N6-succinyllysine). The interval 133–143 is LID; the sequence is ERGKSSGRSDD. Arginine 134 lines the ATP pocket. Residues arginine 140 and arginine 151 each coordinate a ribonucleoside 5'-phosphate. Residue lysine 179 participates in ATP binding. Residue serine 180 is modified to Phosphoserine.

This sequence belongs to the adenylate kinase family. UMP-CMP kinase subfamily. As to quaternary structure, monomer. The cofactor is Mg(2+).

The protein localises to the nucleus. It is found in the cytoplasm. It carries out the reaction CMP + ATP = CDP + ADP. The enzyme catalyses dCMP + ATP = dCDP + ADP. The catalysed reaction is UMP + ATP = UDP + ADP. It catalyses the reaction a 2'-deoxyribonucleoside 5'-diphosphate + ATP = a 2'-deoxyribonucleoside 5'-triphosphate + ADP. It carries out the reaction a ribonucleoside 5'-diphosphate + ATP = a ribonucleoside 5'-triphosphate + ADP. In terms of biological role, catalyzes the phosphorylation of pyrimidine nucleoside monophosphates at the expense of ATP. Plays an important role in de novo pyrimidine nucleotide biosynthesis. Has preference for UMP and CMP as phosphate acceptors. Also displays broad nucleoside diphosphate kinase activity. The polypeptide is UMP-CMP kinase (Sus scrofa (Pig)).